Consider the following 429-residue polypeptide: Glutamate-1-semialdehyde 2,1-aminomutase 2 (429 aa).

N6-(pyridoxal phosphate)lysine is present on Lys268.

The protein belongs to the class-III pyridoxal-phosphate-dependent aminotransferase family. HemL subfamily. Homodimer. It depends on pyridoxal 5'-phosphate as a cofactor.

Its subcellular location is the cytoplasm. The catalysed reaction is (S)-4-amino-5-oxopentanoate = 5-aminolevulinate. Its pathway is porphyrin-containing compound metabolism; protoporphyrin-IX biosynthesis; 5-aminolevulinate from L-glutamyl-tRNA(Glu): step 2/2. The chain is Glutamate-1-semialdehyde 2,1-aminomutase 2 from Staphylococcus aureus (strain MRSA252).